The chain runs to 214 residues: Guanylate kinase (214 aa).

A Guanylate kinase-like domain is found at 12–191; the sequence is GLMLVMSSPS…SIAAVQAILA (180 aa). 19–26 contacts ATP; sequence SPSGAGKT.

The protein belongs to the guanylate kinase family.

The protein localises to the cytoplasm. It carries out the reaction GMP + ATP = GDP + ADP. Essential for recycling GMP and indirectly, cGMP. The protein is Guanylate kinase of Paramagnetospirillum magneticum (strain ATCC 700264 / AMB-1) (Magnetospirillum magneticum).